The chain runs to 212 residues: Outer-membrane lipoprotein LolB (212 aa).

The first 16 residues, 1–16, serve as a signal peptide directing secretion; the sequence is MACRSWVLGILLVLVG. The N-palmitoyl cysteine moiety is linked to residue cysteine 17. Cysteine 17 carries S-diacylglycerol cysteine lipidation.

Belongs to the LolB family. In terms of assembly, monomer.

The protein localises to the cell outer membrane. Plays a critical role in the incorporation of lipoproteins in the outer membrane after they are released by the LolA protein. In Nitrosomonas europaea (strain ATCC 19718 / CIP 103999 / KCTC 2705 / NBRC 14298), this protein is Outer-membrane lipoprotein LolB.